Here is a 255-residue protein sequence, read N- to C-terminus: Indole-3-glycerol phosphate synthase (255 aa).

This sequence belongs to the TrpC family.

It catalyses the reaction 1-(2-carboxyphenylamino)-1-deoxy-D-ribulose 5-phosphate + H(+) = (1S,2R)-1-C-(indol-3-yl)glycerol 3-phosphate + CO2 + H2O. Its pathway is amino-acid biosynthesis; L-tryptophan biosynthesis; L-tryptophan from chorismate: step 4/5. The sequence is that of Indole-3-glycerol phosphate synthase from Streptococcus pneumoniae (strain Taiwan19F-14).